The following is a 398-amino-acid chain: Nicotinate phosphoribosyltransferase 2 (398 aa).

The residue at position 224 (H224) is a Phosphohistidine; by autocatalysis.

The protein belongs to the NAPRTase family. In terms of processing, transiently phosphorylated on a His residue during the reaction cycle. Phosphorylation strongly increases the affinity for substrates and increases the rate of nicotinate D-ribonucleotide production. Dephosphorylation regenerates the low-affinity form of the enzyme, leading to product release.

It catalyses the reaction nicotinate + 5-phospho-alpha-D-ribose 1-diphosphate + ATP + H2O = nicotinate beta-D-ribonucleotide + ADP + phosphate + diphosphate. The protein operates within cofactor biosynthesis; NAD(+) biosynthesis; nicotinate D-ribonucleotide from nicotinate: step 1/1. Catalyzes the synthesis of beta-nicotinate D-ribonucleotide from nicotinate and 5-phospho-D-ribose 1-phosphate at the expense of ATP. The polypeptide is Nicotinate phosphoribosyltransferase 2 (Pseudomonas aeruginosa (strain ATCC 15692 / DSM 22644 / CIP 104116 / JCM 14847 / LMG 12228 / 1C / PRS 101 / PAO1)).